Reading from the N-terminus, the 149-residue chain is Calmodulin (149 aa).

Alanine 2 carries the N-acetylalanine modification. EF-hand domains lie at 8-43 (EQIA…LGQN), 44-79 (PTEA…KMKD), 81-116 (DSEE…LGEK), and 117-149 (LTDE…MTAK). Aspartate 21, aspartate 23, aspartate 25, threonine 27, glutamate 32, aspartate 57, aspartate 59, asparagine 61, threonine 63, glutamate 68, aspartate 94, aspartate 96, asparagine 98, tyrosine 100, and glutamate 105 together coordinate Ca(2+). N6,N6,N6-trimethyllysine is present on lysine 116. Ca(2+) contacts are provided by aspartate 130, aspartate 132, aspartate 134, glutamine 136, and glutamate 141.

Belongs to the calmodulin family.

Calmodulin acts as part of a calcium signal transduction pathway by mediating the control of a large number of enzymes, ion channels, aquaporins and other proteins through calcium-binding. Calcium-binding is required for the activation of calmodulin. Among the enzymes to be stimulated by the calmodulin-calcium complex are a number of protein kinases, such as myosin light-chain kinases and calmodulin-dependent protein kinase type II (CaMK2), and phosphatases. This chain is Calmodulin (calm), found in Electrophorus electricus (Electric eel).